A 400-amino-acid polypeptide reads, in one-letter code: Tryptophan synthase beta chain (400 aa).

N6-(pyridoxal phosphate)lysine is present on Lys-90.

The protein belongs to the TrpB family. As to quaternary structure, tetramer of two alpha and two beta chains. Pyridoxal 5'-phosphate is required as a cofactor.

It catalyses the reaction (1S,2R)-1-C-(indol-3-yl)glycerol 3-phosphate + L-serine = D-glyceraldehyde 3-phosphate + L-tryptophan + H2O. The protein operates within amino-acid biosynthesis; L-tryptophan biosynthesis; L-tryptophan from chorismate: step 5/5. In terms of biological role, the beta subunit is responsible for the synthesis of L-tryptophan from indole and L-serine. This is Tryptophan synthase beta chain from Alkaliphilus metalliredigens (strain QYMF).